We begin with the raw amino-acid sequence, 69 residues long: DNA gyrase inhibitor YacG (69 aa).

Zn(2+) is bound by residues C7, C10, C26, and C30.

This sequence belongs to the DNA gyrase inhibitor YacG family. Interacts with GyrB. Requires Zn(2+) as cofactor.

Functionally, inhibits all the catalytic activities of DNA gyrase by preventing its interaction with DNA. Acts by binding directly to the C-terminal domain of GyrB, which probably disrupts DNA binding by the gyrase. The chain is DNA gyrase inhibitor YacG from Shewanella putrefaciens (strain CN-32 / ATCC BAA-453).